Here is a 265-residue protein sequence, read N- to C-terminus: 3-methyl-2-oxobutanoate hydroxymethyltransferase (265 aa).

The Mg(2+) site is built by Asp44 and Asp83. Residues Asp44–Ser45, Asp83, and Lys113 contribute to the 3-methyl-2-oxobutanoate site. Residue Glu115 participates in Mg(2+) binding. Glu182 serves as the catalytic Proton acceptor.

This sequence belongs to the PanB family. As to quaternary structure, homodecamer; pentamer of dimers. Mg(2+) is required as a cofactor.

The protein localises to the cytoplasm. The enzyme catalyses 3-methyl-2-oxobutanoate + (6R)-5,10-methylene-5,6,7,8-tetrahydrofolate + H2O = 2-dehydropantoate + (6S)-5,6,7,8-tetrahydrofolate. The protein operates within cofactor biosynthesis; (R)-pantothenate biosynthesis; (R)-pantoate from 3-methyl-2-oxobutanoate: step 1/2. Functionally, catalyzes the reversible reaction in which hydroxymethyl group from 5,10-methylenetetrahydrofolate is transferred onto alpha-ketoisovalerate to form ketopantoate. In Aquifex aeolicus (strain VF5), this protein is 3-methyl-2-oxobutanoate hydroxymethyltransferase.